Consider the following 379-residue polypeptide: Cell division protein FtsZ (379 aa).

Residues 18–22 (GGGVN), 105–107 (GTG), Glu-136, Arg-140, and Asp-184 contribute to the GTP site.

It belongs to the FtsZ family. Homodimer. Polymerizes to form a dynamic ring structure in a strictly GTP-dependent manner. Interacts directly with several other division proteins.

The protein localises to the cytoplasm. Functionally, essential cell division protein that forms a contractile ring structure (Z ring) at the future cell division site. The regulation of the ring assembly controls the timing and the location of cell division. One of the functions of the FtsZ ring is to recruit other cell division proteins to the septum to produce a new cell wall between the dividing cells. Binds GTP and shows GTPase activity. In Mycobacterium bovis (strain ATCC BAA-935 / AF2122/97), this protein is Cell division protein FtsZ.